The following is a 103-amino-acid chain: MIKSELVQIVAARNPHLYHRDVENIVNAVLDEITDALAAGNRVELRGFGAFSVKNRPSRSGRNPRTGDSVFVEEKWVPFFKTGKELRERLNPGMNDNNNGEDD.

The protein belongs to the bacterial histone-like protein family. Heterodimer of an alpha and a beta chain.

Functionally, this protein is one of the two subunits of integration host factor, a specific DNA-binding protein that functions in genetic recombination as well as in transcriptional and translational control. The protein is Integration host factor subunit beta of Rhizobium meliloti (strain 1021) (Ensifer meliloti).